A 124-amino-acid polypeptide reads, in one-letter code: Large ribosomal subunit protein bL12 (124 aa).

This sequence belongs to the bacterial ribosomal protein bL12 family. As to quaternary structure, homodimer. Part of the ribosomal stalk of the 50S ribosomal subunit. Forms a multimeric L10(L12)X complex, where L10 forms an elongated spine to which 2 to 4 L12 dimers bind in a sequential fashion. Binds GTP-bound translation factors.

Its function is as follows. Forms part of the ribosomal stalk which helps the ribosome interact with GTP-bound translation factors. Is thus essential for accurate translation. In Chlorobium chlorochromatii (strain CaD3), this protein is Large ribosomal subunit protein bL12.